We begin with the raw amino-acid sequence, 562 residues long: Efflux pump apf11 (562 aa).

2 stretches are compositionally biased toward low complexity: residues 1-10 (MGDISAATKA) and 18-30 (TPETNTTSSSSDT). Positions 1–36 (MGDISAATKAPAPPTPATPETNTTSSSSDTDVQHEP) are disordered. Asn22 carries an N-linked (GlcNAc...) asparagine glycan. The next 8 helical transmembrane spans lie at 46-66 (LVIFALGLAILVGVLDATIVA), 83-103 (AWYGSAYLLVTGATQPIFGKI), 110-130 (KLVFLSSVAILEVGSLVCALA), 141-161 (AIAGLGAAGVISGGLIITALT), 169-189 (VYTAILGSLEGVGVIIGPIIG), 200-220 (WCFWINLPIGAVLCAILVFCL), 249-269 (GGLAIAGSITCLLLALEWGGT), and 278-298 (IIVLLVVFGVSLICVAVHQHW). A glycan (N-linked (GlcNAc...) asparagine) is linked at Asn312. A run of 6 helical transmembrane segments spans residues 317 to 337 (MFLLCGLCFAGAQFTVLYYLP), 356 to 376 (LAMVVSVIVVSVIAGGSAGAV), 382 to 404 (FVFFATIFSSIGAGMLYTLHPSI), 414 to 434 (ILFGAGSGTGIQQAIVGVQVA), 447 to 467 (VMLVNTLAGSIFIAVSQTLFL), and 516 to 536 (FLIGLVLCSITVLTWPLIRWI).

Belongs to the major facilitator superfamily. TCR/Tet family.

It localises to the membrane. The protein operates within secondary metabolite biosynthesis. In terms of biological role, efflux pump; part of the gene cluster that mediates the biosynthesis of the cyclic tetrapeptide apicidin F (APF). The polypeptide is Efflux pump apf11 (apf11) (Gibberella fujikuroi (strain CBS 195.34 / IMI 58289 / NRRL A-6831) (Bakanae and foot rot disease fungus)).